The sequence spans 224 residues: Response regulator protein GraR (224 aa).

The 114-residue stretch at 2–115 (QILLVEDDNT…VLIAKLQAIY (114 aa)) folds into the Response regulatory domain. D51 is subject to 4-aspartylphosphate. A DNA-binding region (ompR/PhoB-type) is located at residues 126–224 (KRTLSWQDAT…KVGKGYLAHE (99 aa)).

Phosphorylated by GraS.

The protein localises to the cytoplasm. Functionally, member of the two-component regulatory system GraR/GraS involved in resistance against cationic antimicrobial peptides (CAMPs). This Staphylococcus epidermidis (strain ATCC 35984 / DSM 28319 / BCRC 17069 / CCUG 31568 / BM 3577 / RP62A) protein is Response regulator protein GraR (graR).